Here is a 279-residue protein sequence, read N- to C-terminus: Eukaryotic translation initiation factor 3 subunit G (279 aa).

Disordered regions lie at residues 1-26, 66-115, and 152-171; these read MSTG…IANP, RKNW…KAHE, and TPSG…AAGA. Position 78 is a phosphoserine (Ser-78). Positions 102 to 115 are enriched in basic and acidic residues; that stretch reads KQDEKKEEEDKAHE. Low complexity predominate over residues 152–163; sequence TPSGTTPEPTSE. The RRM domain occupies 197 to 276; sequence TTLKVSQLNS…LILHLEWSKK (80 aa).

It belongs to the eIF-3 subunit G family. As to quaternary structure, component of the eukaryotic translation initiation factor 3 (eIF-3) complex.

It is found in the cytoplasm. In terms of biological role, RNA-binding component of the eukaryotic translation initiation factor 3 (eIF-3) complex, which is involved in protein synthesis of a specialized repertoire of mRNAs and, together with other initiation factors, stimulates binding of mRNA and methionyl-tRNAi to the 40S ribosome. The eIF-3 complex specifically targets and initiates translation of a subset of mRNAs involved in cell proliferation. This subunit can bind 18S rRNA. In Candida albicans (strain SC5314 / ATCC MYA-2876) (Yeast), this protein is Eukaryotic translation initiation factor 3 subunit G.